The following is a 626-amino-acid chain: Probable potassium transport system protein Kup (626 aa).

13 helical membrane-spanning segments follow: residues 8 to 28, 44 to 64, 102 to 122, 139 to 159, 171 to 191, 196 to 216, 217 to 237, 249 to 269, 281 to 301, 339 to 359, 377 to 397, 399 to 419, and 421 to 441; these read VALP…IGTS, ISEA…TLSI, IYLI…GIIT, PAFD…LFMV, FGPI…YSII, ILWF…PFVA, FVAM…YADM, WFIV…ALLL, LLVP…AAVI, IYVP…IILF, MLCV…WPWW, VTLF…STSL, and ILSG…ILMT.

The protein belongs to the HAK/KUP transporter (TC 2.A.72) family.

It is found in the cell inner membrane. It catalyses the reaction K(+)(in) + H(+)(in) = K(+)(out) + H(+)(out). Functionally, transport of potassium into the cell. Likely operates as a K(+):H(+) symporter. The protein is Probable potassium transport system protein Kup of Acinetobacter baylyi (strain ATCC 33305 / BD413 / ADP1).